A 319-amino-acid polypeptide reads, in one-letter code: Acyl-coenzyme A thioesterase 8 (319 aa).

The interval 1 to 20 (MSSPQAPEDGQGCGDRGDPP) is disordered. Residues Asp-232, Ser-254, and Gln-304 each act as charge relay system in the active site. The Microbody targeting signal motif lies at 317 to 319 (SKL).

Belongs to the C/M/P thioester hydrolase family. In terms of assembly, homodimer. As to quaternary structure, (Microbial infection) Interacts with human immunodeficiency virus (HIV-1) Nef (via middle region); this interaction enhances ACOT8 Acyl-CoA thioesterase activity and occurs in a Nef myristoylation-independent manner. According to a second report, the interaction with HIV-1 Nef occurs in a Nef myristoylation-independent manner but does not enhance ACOT8 Acyl-CoA thioesterase activity. In terms of tissue distribution, detected in a T-cell line (at protein level). Ubiquitous.

The protein localises to the peroxisome matrix. It catalyses the reaction choloyl-CoA + H2O = cholate + CoA + H(+). The enzyme catalyses chenodeoxycholoyl-CoA + H2O = chenodeoxycholate + CoA + H(+). It carries out the reaction acetyl-CoA + H2O = acetate + CoA + H(+). The catalysed reaction is butanoyl-CoA + H2O = butanoate + CoA + H(+). It catalyses the reaction 2-methylpropanoyl-CoA + H2O = 2-methylpropanoate + CoA + H(+). The enzyme catalyses hexanoyl-CoA + H2O = hexanoate + CoA + H(+). It carries out the reaction octanoyl-CoA + H2O = octanoate + CoA + H(+). The catalysed reaction is decanoyl-CoA + H2O = decanoate + CoA + H(+). It catalyses the reaction dodecanoyl-CoA + H2O = dodecanoate + CoA + H(+). The enzyme catalyses tetradecanoyl-CoA + H2O = tetradecanoate + CoA + H(+). It carries out the reaction hexadecanoyl-CoA + H2O = hexadecanoate + CoA + H(+). The catalysed reaction is octadecanoyl-CoA + H2O = octadecanoate + CoA + H(+). It catalyses the reaction malonyl-CoA + H2O = malonate + CoA + H(+). The enzyme catalyses acetoacetyl-CoA + H2O = acetoacetate + CoA + H(+). It carries out the reaction propanoyl-CoA + H2O = propanoate + CoA + H(+). The catalysed reaction is succinyl-CoA + H2O = succinate + CoA + H(+). It catalyses the reaction glutaryl-CoA + H2O = glutarate + CoA + H(+). The enzyme catalyses hexanedioyl-CoA + H2O = hexanedioate + CoA + H(+). It carries out the reaction octanedioyl-CoA + H2O = octanedioate + CoA + H(+). The catalysed reaction is decanedioyl-CoA + H2O = decanedioate + CoA + H(+). It catalyses the reaction dodecanedioyl-CoA + H2O = dodecanedioate + CoA + H(+). The enzyme catalyses (9Z)-tetradecenoyl-CoA + H2O = (9Z)-tetradecenoate + CoA + H(+). It carries out the reaction (9Z)-hexadecenoyl-CoA + H2O = (9Z)-hexadecenoate + CoA + H(+). The catalysed reaction is (9Z)-octadecenoyl-CoA + H2O = (9Z)-octadecenoate + CoA + H(+). It catalyses the reaction (9Z,12Z)-octadecadienoyl-CoA + H2O = (9Z,12Z)-octadecadienoate + CoA + H(+). The enzyme catalyses eicosanoyl-CoA + H2O = eicosanoate + CoA + H(+). It carries out the reaction (5Z,8Z,11Z,14Z)-eicosatetraenoyl-CoA + H2O = (5Z,8Z,11Z,14Z)-eicosatetraenoate + CoA + H(+). The catalysed reaction is 4,8-dimethylnonanoyl-CoA + H2O = 4,8-dimethylnonanoate + CoA + H(+). It catalyses the reaction 2,6-dimethylheptanoyl-CoA + H2O = 2,6-dimethylheptanoate + CoA + H(+). The enzyme catalyses (3S)-3-hydroxy-3-methylglutaryl-CoA + H2O = 3-hydroxy-3-methylglutarate + CoA + H(+). It carries out the reaction 3alpha,7alpha,12alpha-trihydroxy-5beta-cholestan-26-oyl-CoA + H2O = 3alpha,7alpha,12alpha-trihydroxy-5beta-cholestan-26-oate + CoA + H(+). The catalysed reaction is 2-methyloctadecanoyl-CoA + H2O = 2-methyloctadecanoate + CoA + H(+). It catalyses the reaction prostaglandin F2alpha-CoA + H2O = prostaglandin F2alpha + CoA + H(+). It participates in lipid metabolism; fatty acid metabolism. Its activity is regulated as follows. Inhibited by CoASH (IC(50)=10-15 uM). Also inhibited by cysteine-reactive agents. In terms of biological role, catalyzes the hydrolysis of acyl-CoAs into free fatty acids and coenzyme A (CoASH), regulating their respective intracellular levels. Displays no strong substrate specificity with respect to the carboxylic acid moiety of Acyl-CoAs. Hydrolyzes medium length (C2 to C20) straight-chain, saturated and unsaturated acyl-CoAS but is inactive towards substrates with longer aliphatic chains. Moreover, it catalyzes the hydrolysis of CoA esters of bile acids, such as choloyl-CoA and chenodeoxycholoyl-CoA and competes with bile acid CoA:amino acid N-acyltransferase (BAAT). Is also able to hydrolyze CoA esters of dicarboxylic acids. It is involved in the metabolic regulation of peroxisome proliferation. Its function is as follows. (Microbial infection) May mediate Nef-induced down-regulation of CD4 cell-surface expression. The chain is Acyl-coenzyme A thioesterase 8 (ACOT8) from Homo sapiens (Human).